Reading from the N-terminus, the 237-residue chain is Ribosomal RNA small subunit methyltransferase G (237 aa).

S-adenosyl-L-methionine-binding positions include glycine 78, phenylalanine 83, 129–130 (AE), and arginine 148. Residues 218 to 237 (KKETPRKYPRKAGTPNKKPL) form a disordered region.

The protein belongs to the methyltransferase superfamily. RNA methyltransferase RsmG family.

It localises to the cytoplasm. In terms of biological role, specifically methylates the N7 position of a guanine in 16S rRNA. The sequence is that of Ribosomal RNA small subunit methyltransferase G from Streptococcus uberis (strain ATCC BAA-854 / 0140J).